The chain runs to 153 residues: Large ribosomal subunit protein eL15 (153 aa).

A Glycyl lysine isopeptide (Lys-Gly) (interchain with G-Cter in SUMO2) cross-link involves residue lysine 32. Phosphoserine occurs at positions 46 and 49. The interval 114 to 135 (TSAGRKSRGLGKGHKFHHTIGG) is disordered. Residues 118-131 (RKSRGLGKGHKFHH) show a composition bias toward basic residues.

Belongs to the eukaryotic ribosomal protein eL15 family. As to quaternary structure, component of the large ribosomal subunit. Interacts with IFIT1 (via TPR repeats 1-4).

The protein localises to the cytoplasm. In terms of biological role, component of the large ribosomal subunit. The ribosome is a large ribonucleoprotein complex responsible for the synthesis of proteins in the cell. In Sus scrofa (Pig), this protein is Large ribosomal subunit protein eL15 (RPL15).